Reading from the N-terminus, the 523-residue chain is 2-isopropylmalate synthase (523 aa).

In terms of domain architecture, Pyruvate carboxyltransferase spans 5–267 (VIIFDTTLRD…HTNINHHEIW (263 aa)). Mn(2+) contacts are provided by aspartate 14, histidine 202, histidine 204, and asparagine 238. Residues 392 to 523 (RLDYFSVQSG…QNKENNKETV (132 aa)) are regulatory domain.

This sequence belongs to the alpha-IPM synthase/homocitrate synthase family. LeuA type 1 subfamily. Homodimer. It depends on Mn(2+) as a cofactor.

The protein resides in the cytoplasm. The enzyme catalyses 3-methyl-2-oxobutanoate + acetyl-CoA + H2O = (2S)-2-isopropylmalate + CoA + H(+). It functions in the pathway amino-acid biosynthesis; L-leucine biosynthesis; L-leucine from 3-methyl-2-oxobutanoate: step 1/4. Catalyzes the condensation of the acetyl group of acetyl-CoA with 3-methyl-2-oxobutanoate (2-ketoisovalerate) to form 3-carboxy-3-hydroxy-4-methylpentanoate (2-isopropylmalate). This is 2-isopropylmalate synthase from Salmonella choleraesuis (strain SC-B67).